Here is a 432-residue protein sequence, read N- to C-terminus: Adenylosuccinate synthetase (432 aa).

Residues glycine 12–lysine 18 and glycine 40–threonine 42 each bind GTP. Catalysis depends on aspartate 13, which acts as the Proton acceptor. Positions 13 and 40 each coordinate Mg(2+). IMP is bound by residues aspartate 13–lysine 16, asparagine 38–histidine 41, threonine 130, arginine 144, glutamine 225, threonine 240, and arginine 304. Histidine 41 (proton donor) is an active-site residue. Serine 300–arginine 306 provides a ligand contact to substrate. Residues arginine 306, lysine 332–aspartate 334, and serine 414–glycine 416 contribute to the GTP site.

The protein belongs to the adenylosuccinate synthetase family. As to quaternary structure, homodimer. Mg(2+) serves as cofactor.

The protein resides in the cytoplasm. It catalyses the reaction IMP + L-aspartate + GTP = N(6)-(1,2-dicarboxyethyl)-AMP + GDP + phosphate + 2 H(+). It participates in purine metabolism; AMP biosynthesis via de novo pathway; AMP from IMP: step 1/2. Plays an important role in the de novo pathway of purine nucleotide biosynthesis. Catalyzes the first committed step in the biosynthesis of AMP from IMP. In Geobacter sp. (strain M21), this protein is Adenylosuccinate synthetase.